A 510-amino-acid chain; its full sequence is Inner membrane protein YeeR (510 aa).

Position 1 (methionine 1) is a topological domain, cytoplasmic. A helical membrane pass occupies residues leucine 2–phenylalanine 22. Residues arginine 23–serine 30 are Periplasmic-facing. A helical transmembrane segment spans residues alanine 31 to threonine 51. Residues glutamate 52–arginine 61 are Cytoplasmic-facing. A helical transmembrane segment spans residues tryptophan 62–aspartate 82. Over glycine 83–aspartate 94 the chain is Periplasmic. Residues serine 95–isoleucine 115 traverse the membrane as a helical segment. Topologically, residues lysine 116–tyrosine 136 are cytoplasmic. The chain crosses the membrane as a helical span at residues cysteine 137 to leucine 157. Topologically, residues glutamine 158–serine 164 are periplasmic. Residues leucine 165–alanine 185 form a helical membrane-spanning segment. The Cytoplasmic portion of the chain corresponds to serine 186–arginine 510.

The protein resides in the cell inner membrane. The chain is Inner membrane protein YeeR (yeeR) from Escherichia coli (strain K12).